The following is a 475-amino-acid chain: Ribulose bisphosphate carboxylase large chain (475 aa).

Residues Asn123 and Thr173 each contribute to the substrate site. Lys175 acts as the Proton acceptor in catalysis. Lys177 is a binding site for substrate. Mg(2+) is bound by residues Lys201, Asp203, and Glu204. Lys201 bears the N6-carboxylysine mark. His294 functions as the Proton acceptor in the catalytic mechanism. Substrate is bound by residues Arg295, His327, and Ser379.

The protein belongs to the RuBisCO large chain family. Type I subfamily. Heterohexadecamer of 8 large chains and 8 small chains; disulfide-linked. The disulfide link is formed within the large subunit homodimers. Mg(2+) serves as cofactor. In terms of processing, the disulfide bond which can form in the large chain dimeric partners within the hexadecamer appears to be associated with oxidative stress and protein turnover.

It localises to the plastid. It is found in the chloroplast. It catalyses the reaction 2 (2R)-3-phosphoglycerate + 2 H(+) = D-ribulose 1,5-bisphosphate + CO2 + H2O. It carries out the reaction D-ribulose 1,5-bisphosphate + O2 = 2-phosphoglycolate + (2R)-3-phosphoglycerate + 2 H(+). In terms of biological role, ruBisCO catalyzes two reactions: the carboxylation of D-ribulose 1,5-bisphosphate, the primary event in carbon dioxide fixation, as well as the oxidative fragmentation of the pentose substrate in the photorespiration process. Both reactions occur simultaneously and in competition at the same active site. The protein is Ribulose bisphosphate carboxylase large chain of Euglena gracilis.